We begin with the raw amino-acid sequence, 348 residues long: NFSTPLNEYEEGSYESAGYTVLRILPLVVLGVTFVLGVLGNGLVIWVAGFRMTRTVTTICYLNLALADFSFTATLPFLIVSMAMGEKWPFGWFLCKLIHIVVDINLFGSVFLIGFIALDRCICVLHPVWAQNHRTVSLAMKVIVGPWILALVLTLPVFLFLTTVTIPNGDTYCTFNFASWGGTPEERLKVAITLLTARGIIRFVIGFSLPMSIVAICYGLIAAKIHKKGMIKSSRPLRVLTAVVASFFICWFPFQLVALLGTVWLKEMLFYGKYKIIDILVNPTSSLAFFNCCLNPMLYVFVGQDFRERLIHSLPTSLERALSEDSAPTNDTAANCASPPAETELQAM.

Asn-1 is a glycosylation site (N-linked (GlcNAc...) asparagine). The Extracellular segment spans residues 1 to 24 (NFSTPLNEYEEGSYESAGYTVLRI). A helical transmembrane segment spans residues 25–47 (LPLVVLGVTFVLGVLGNGLVIWV). Residues 48 to 58 (AGFRMTRTVTT) lie on the Cytoplasmic side of the membrane. The chain crosses the membrane as a helical span at residues 59–80 (ICYLNLALADFSFTATLPFLIV). The Extracellular portion of the chain corresponds to 81–97 (SMAMGEKWPFGWFLCKL). A disulfide bond links Cys-95 and Cys-173. A helical membrane pass occupies residues 98–118 (IHIVVDINLFGSVFLIGFIAL). The Cytoplasmic portion of the chain corresponds to 119 to 137 (DRCICVLHPVWAQNHRTVS). A helical membrane pass occupies residues 138 to 159 (LAMKVIVGPWILALVLTLPVFL). Residues 160-202 (FLTTVTIPNGDTYCTFNFASWGGTPEERLKVAITLLTARGIIR) are Extracellular-facing. A helical transmembrane segment spans residues 203-223 (FVIGFSLPMSIVAICYGLIAA). Residues 224-239 (KIHKKGMIKSSRPLRV) are Cytoplasmic-facing. The chain crosses the membrane as a helical span at residues 240-263 (LTAVVASFFICWFPFQLVALLGTV). Topologically, residues 264-283 (WLKEMLFYGKYKIIDILVNP) are extracellular. A helical membrane pass occupies residues 284–303 (TSSLAFFNCCLNPMLYVFVG). At 304-348 (QDFRERLIHSLPTSLERALSEDSAPTNDTAANCASPPAETELQAM) the chain is on the cytoplasmic side. Positions 322–348 (LSEDSAPTNDTAANCASPPAETELQAM) are disordered. Residues 326–335 (SAPTNDTAAN) show a composition bias toward polar residues.

It belongs to the G-protein coupled receptor 1 family. Interacts with Amyloid-beta protein 42, product of APP; the interaction takes place at the cell surface and the complex is then rapidly internalized.

It is found in the cell membrane. Its function is as follows. Low affinity receptor for N-formyl-methionyl peptides, which are powerful neutrophil chemotactic factors. Binding of FMLP to the receptor causes activation of neutrophils. This response is mediated via a G-protein that activates a phosphatidylinositol-calcium second messenger system. Receptor for the chemokine-like protein FAM19A5, mediating FAM19A5-stimulated macrophage chemotaxis and the inhibitory effect on TNFSF11/RANKL-induced osteoclast differentiation. This Pan troglodytes (Chimpanzee) protein is N-formyl peptide receptor 2 (FPR2).